A 153-amino-acid polypeptide reads, in one-letter code: MADTLMSDIPFWQSKTLDDMTDAEWESLCDGCGQCCLHKLMDEDTDEIYFTNVACRQLNIKTCQCRNYERRFEYEPDCIKLTRDNLPTFEWLPMTCAYRLLAEGKGLPGWHPLLTGSKAAMHGERISVRHIAVKESEVRDWQDHILNKPSWAD.

The protein belongs to the UPF0260 family.

The protein is UPF0260 protein CKO_01185 of Citrobacter koseri (strain ATCC BAA-895 / CDC 4225-83 / SGSC4696).